The sequence spans 676 residues: Envelope glycoprotein (676 aa).

The N-terminal stretch at 1–32 (MGASGILQLPRERFRKTSFFVWVIILFHKVFS) is a signal peptide. Topologically, residues 33-650 (IPLGVVHNNT…GSNWWTGWKQ (618 aa)) are extracellular. A glycan (N-linked (GlcNAc...) asparagine; by host) is linked at Asn-40. Disulfide bonds link Cys-53/Cys-609, Cys-108/Cys-135, Cys-121/Cys-147, Cys-511/Cys-556, and Cys-601/Cys-608. The receptor-binding stretch occupies residues 54–201 (RDKLSSTSQL…DFFQSPPLHE (148 aa)). 5 N-linked (GlcNAc...) asparagine; by host glycosylation sites follow: Asn-204, Asn-228, Asn-257, Asn-268, and Asn-296. The tract at residues 305–485 (ELSFVPVPET…LSGPGFLTNT (181 aa)) is mucin-like region. The disordered stretch occupies residues 356–463 (IKGKDTMPTT…PTTLPEQHTA (108 aa)). Positions 361–374 (TMPTTVTGVPTTTP) are enriched in low complexity. Residues 402 to 422 (TTQPAKTTSQPTNSTESTTLN) show a composition bias toward polar residues. An N-linked (GlcNAc...) asparagine; by host glycan is attached at Asn-414. A compositionally biased stretch (low complexity) spans 423 to 440 (PTSEPSSRGTGPSSPTVP). N-linked (GlcNAc...) asparagine; by host glycosylation occurs at Asn-441. Over residues 452–463 (TTPTTLPEQHTA) the composition is skewed to polar residues. The tract at residues 524-539 (GAAIGLAWIPYFGPAA) is fusion peptide. Residues 554-595 (LICGLRQLANETTQALQLFLRATTELRTFSILNRKAIDFLLQ) are a coiled coil. The N-linked (GlcNAc...) asparagine; by host glycan is linked to Asn-563. Residues 615–634 (WTKNITDKIDQIIHDFVDNN) adopt a coiled-coil conformation. N-linked (GlcNAc...) asparagine; by host glycosylation occurs at Asn-618. Residues 651–671 (WVPAGIGITGVIIAIIALLCI) traverse the membrane as a helical segment. S-palmitoyl cysteine; by host attachment occurs at residues Cys-670 and Cys-672. The Cytoplasmic segment spans residues 672–676 (CKFML).

It belongs to the filoviruses glycoprotein family. In terms of assembly, homotrimer; each monomer consists of a GP1 and a GP2 subunit linked by disulfide bonds. The resulting peplomers (GP1,2) protrude from the virus surface as spikes. GP1 and GP2delta are part of GP1,2delta soluble complexes released by ectodomain shedding. GP1,2 interacts with host integrin ITGAV/alpha-V and CLEC10A. Also binds human CD209 and CLEC4M (collectively referred to as DC-SIGN(R)), as well as human FOLR1. Interacts with host entry receptor NPC1. In terms of processing, the signal peptide region modulates GP's high mannose glycosylation, thereby determining the efficiency of the interactions with DC-SIGN(R). N-glycosylated. Post-translationally, O-glycosylated in the mucin-like region. In terms of processing, palmitoylation of GP2 is not required for its function. Specific enzymatic cleavages in vivo yield mature proteins. The precursor is processed into GP1 and GP2 by host cell furin in the trans Golgi, and maybe by other host proteases, to yield the mature GP1 and GP2 proteins. The cleavage site corresponds to the furin optimal cleavage sequence [KR]-X-[KR]-R. This cleavage does not seem to be required for function. After the internalization of the virus into cell endosomes, GP1 C-terminus is removed by the endosomal proteases cathepsin B, cathepsin L, or both, leaving a 19-kDa N-terminal fragment which is further digested by cathepsin B. Proteolytic processing of GP1,2 by host ADAM17 can remove the transmembrane anchor of GP2 and leads to shedding of complexes consisting in GP1 and truncated GP2 (GP1,2delta).

It localises to the virion membrane. The protein localises to the host cell membrane. It is found in the secreted. Its function is as follows. GP1 is responsible for binding to the receptor(s) on target cells. Interacts with CD209/DC-SIGN and CLEC4M/DC-SIGNR which act as cofactors for virus entry into the host cell. Binding to CD209 and CLEC4M, which are respectively found on dendritic cells (DCs), and on endothelial cells of liver sinusoids and lymph node sinuses, facilitate infection of macrophages and endothelial cells. These interactions not only facilitate virus cell entry, but also allow capture of viral particles by DCs and subsequent transmission to susceptible cells without DCs infection (trans infection). Binding to the macrophage specific lectin CLEC10A also seems to enhance virus infectivity. Interaction with FOLR1/folate receptor alpha may be a cofactor for virus entry in some cell types, although results are contradictory. Members of the Tyro3 receptor tyrosine kinase family also seem to be cell entry factors in filovirus infection. Once attached, the virions are internalized through clathrin-dependent endocytosis and/or macropinocytosis. After internalization of the virus into the endosomes of the host cell, proteolysis of GP1 by two cysteine proteases, CTSB/cathepsin B and CTSL/cathepsin L presumably induces a conformational change of GP2, unmasking its fusion peptide and initiating membranes fusion. Functionally, GP2 acts as a class I viral fusion protein. Under the current model, the protein has at least 3 conformational states: pre-fusion native state, pre-hairpin intermediate state, and post-fusion hairpin state. During viral and target cell membrane fusion, the coiled coil regions (heptad repeats) assume a trimer-of-hairpins structure, positioning the fusion peptide in close proximity to the C-terminal region of the ectodomain. The formation of this structure appears to drive apposition and subsequent fusion of viral and target cell membranes. Responsible for penetration of the virus into the cell cytoplasm by mediating the fusion of the membrane of the endocytosed virus particle with the endosomal membrane. Low pH in endosomes induces an irreversible conformational change in GP2, releasing the fusion hydrophobic peptide. GP1,2 which is the disulfid-linked complex of GP1 and GP2, mediates endothelial cell activation and decreases endothelial barrier function. Mediates activation of primary macrophages. At terminal stages of the viral infection, when its expression is high, GP1,2 down-modulates the expression of various host cell surface molecules that are essential for immune surveillance and cell adhesion. Down-modulates integrins ITGA1, ITGA2, ITGA3, ITGA4, ITGA5, ITGA6, ITGAV and ITGB1. GP1,2 alters the cellular recycling of the dimer alpha-V/beta-3 via a dynamin-dependent pathway. Decrease in the host cell surface expression of various adhesion molecules may lead to cell detachment, contributing to the disruption of blood vessel integrity and hemorrhages developed during Ebola virus infection (cytotoxicity). This cytotoxicity appears late in the infection, only after the massive release of viral particles by infected cells. Down-modulation of host MHC-I, leading to altered recognition by immune cells, may explain the immune suppression and inflammatory dysfunction linked to Ebola infection. Also down-modulates EGFR surface expression. Counteracts the antiviral effect of host tetherin. In terms of biological role, GP2delta is part of the complex GP1,2delta released by host ADAM17 metalloprotease. This secreted complex may play a role in the pathogenesis of the virus by efficiently blocking the neutralizing antibodies that would otherwise neutralize the virus surface glycoproteins GP1,2. Might therefore contribute to the lack of inflammatory reaction seen during infection in spite the of extensive necrosis and massive virus production. GP1,2delta does not seem to be involved in activation of primary macrophages. The chain is Envelope glycoprotein (GP) from Tai Forest ebolavirus (strain Cote d'Ivoire-94) (TAFV).